The sequence spans 449 residues: Exodeoxyribonuclease 7 large subunit (449 aa).

The protein belongs to the XseA family. In terms of assembly, heterooligomer composed of large and small subunits.

Its subcellular location is the cytoplasm. It carries out the reaction Exonucleolytic cleavage in either 5'- to 3'- or 3'- to 5'-direction to yield nucleoside 5'-phosphates.. Bidirectionally degrades single-stranded DNA into large acid-insoluble oligonucleotides, which are then degraded further into small acid-soluble oligonucleotides. The chain is Exodeoxyribonuclease 7 large subunit from Salmonella paratyphi A (strain ATCC 9150 / SARB42).